The chain runs to 556 residues: MSEAEARPTNFIRQIIDDDLASGKHTSVHTRFPPEPNGYLHIGHAKSIYLNFGIAQDYQGQCNLRFDDTNPVKEDMEYVDSIKHDVQWLGFNWSGDIHYSSDYFDKLHDYALELIDKGLAYVDQLSPDQIRDYRGTLTRPGKNSPYRDRSVEENRALFASMRQGEFAEGSACLRAKIDMASPFMVMRDPVLYRIKFADHHQTGSKWCIYPMYDFTHCISDALEGITHSLCTLEFQDNRRLYDWVLDNITINVHPRQYEFSRLNLEYAIMSKRKLNLLVTEKIVEGWDDPRMPTISGLRRRGYTAASIREFCRRIGVTKQDNNVEMAALEACIREDLNDRAPRAMAVIDPVRVVIESLPMGYEQDIAMPNHPNRPEMGTRQVAFSREIYIDRADFREEANKQYKRLVLGKEVRLRNAFVIKAEHVEKDPQGQITTIFCRHDPDTLSKDPADGRKVKGVIHWVSANRSLAAEFRLYDRLFSEANPAAAEDFLSTLNPDSLVIRQGFVEAGVPAANTGEPFQFEREGYFCADSRYFSPTHPVFNRTVGLRDTWAQRAAM.

Positions Pro34 to His44 match the 'HIGH' region motif. ATP is bound by residues Glu35 to Asn37 and His41 to Ser47. Residues Asp67 and Tyr212 each coordinate L-glutamine. Residues Thr231, Arg261 to Leu262, and Met269 to Lys271 contribute to the ATP site. The 'KMSKS' region motif lies at Ile268 to Arg272.

This sequence belongs to the class-I aminoacyl-tRNA synthetase family. Monomer.

It localises to the cytoplasm. The enzyme catalyses tRNA(Gln) + L-glutamine + ATP = L-glutaminyl-tRNA(Gln) + AMP + diphosphate. In Sodalis glossinidius (strain morsitans), this protein is Glutamine--tRNA ligase.